Consider the following 396-residue polypeptide: Proteinase-activated receptor 4 (396 aa).

Positions 1–16 (MCWPLLYPLVLGLSIS) are cleaved as a signal peptide. Residues 17–59 (LAEGIQTPSIYDDVESTRGSHEGPLGPTVELKEPKSSDKPNPR) constitute a propeptide, removed for receptor activation. Residues 28–62 (DDVESTRGSHEGPLGPTVELKEPKSSDKPNPRGYP) are disordered. Residues 46–57 (ELKEPKSSDKPN) are compositionally biased toward basic and acidic residues. Topologically, residues 60 to 94 (GYPGKFCANDSDTLELPASSQALLLGWVPTRLVPA) are extracellular. A glycan (N-linked (GlcNAc...) asparagine) is linked at Asn-68. A helical membrane pass occupies residues 95–115 (LYGLVVAVGLPANGLALWVLA). The Cytoplasmic portion of the chain corresponds to 116–120 (TRVPR). A helical transmembrane segment spans residues 121–141 (LPSTILLMNLAVADLLLALVL). The Extracellular portion of the chain corresponds to 142 to 162 (PPRLAYHLRGQRWPFGEAACR). Cys-161 and Cys-240 are disulfide-bonded. Residues 163-183 (VATAALYGHMYGSVLLLAAVS) form a helical membrane-spanning segment. Residues 184–203 (LDRYLALVHPLRARALRGQR) lie on the Cytoplasmic side of the membrane. A helical transmembrane segment spans residues 204–224 (LTTGLCLVAWLSAATLALPLT). At 225–255 (LHRQTFRLAGSDRMLCHDALPLTEQTSHWRP) the chain is on the extracellular side. Residues 256-276 (AFICLAVLGCFVPLLAMGLCY) form a helical membrane-spanning segment. At 277–295 (GATLRALAANGQRYSHALR) the chain is on the cytoplasmic side. Residues 296-316 (LTALVLFSAVASFTPSNVLLV) form a helical membrane-spanning segment. At 317–331 (LHYSNPSPEAWGNLY) the chain is on the extracellular side. A helical transmembrane segment spans residues 332 to 355 (GAYVPSLALSTLNSCVDPFIYYYV). Topologically, residues 356–396 (SHEFREKVRAMLCRQPEASSSSQASREAGSRGTAICSSTLL) are cytoplasmic.

It belongs to the G-protein coupled receptor 1 family. Post-translationally, a proteolytic cleavage generates a new N-terminus that functions as a tethered ligand. In terms of tissue distribution, highly expressed in the spleen. Slight expression in the heart, lung, skeletal muscle and kidney. No detectable expression in brain, liver or testis. Also detected in platelets.

Its subcellular location is the cell membrane. Its function is as follows. Receptor for activated thrombin or trypsin coupled to G proteins that stimulate phosphoinositide hydrolysis. May play a role in platelets activation. The sequence is that of Proteinase-activated receptor 4 (F2rl3) from Mus musculus (Mouse).